The following is a 175-amino-acid chain: MAKADKATAVADIAEQFKEATATVVTEYRGLTVANLAQLRRSLGESATYTVAKNTLVKRAAAEAGIDGLDELFTGPTAIAFVQGEPVDAAKAIKAFAKEHKALVIKGGYMEGRALSIDEVNRIADLESREVLLAKLAGAMKGNLAKAAGLFNAPASQVARLAAALQEKKAGEEAA.

Belongs to the universal ribosomal protein uL10 family. Part of the ribosomal stalk of the 50S ribosomal subunit. The N-terminus interacts with L11 and the large rRNA to form the base of the stalk. The C-terminus forms an elongated spine to which L12 dimers bind in a sequential fashion forming a multimeric L10(L12)X complex.

Its function is as follows. Forms part of the ribosomal stalk, playing a central role in the interaction of the ribosome with GTP-bound translation factors. This Mycobacterium sp. (strain KMS) protein is Large ribosomal subunit protein uL10.